The primary structure comprises 238 residues: Citrate-binding protein (238 aa).

Positions methionine 1 to alanine 31 are cleaved as a signal peptide. Residues leucine 225–glutamine 238 constitute a propeptide, removed in mature form.

Its subcellular location is the vacuole. In terms of biological role, may be a subunit of a vacuolar malate and citrate transporter. In Hevea brasiliensis (Para rubber tree), this protein is Citrate-binding protein (CBP).